The chain runs to 345 residues: Fructose-1,6-bisphosphatase class 1 (345 aa).

Glu90, Asp109, Leu111, and Asp112 together coordinate Mg(2+). Substrate is bound by residues Asp112–Ser115 and Asn199. Residue Glu271 coordinates Mg(2+).

The protein belongs to the FBPase class 1 family. As to quaternary structure, homotetramer. It depends on Mg(2+) as a cofactor.

The protein resides in the cytoplasm. It carries out the reaction beta-D-fructose 1,6-bisphosphate + H2O = beta-D-fructose 6-phosphate + phosphate. The protein operates within carbohydrate biosynthesis; Calvin cycle. The sequence is that of Fructose-1,6-bisphosphatase class 1 from Rhodopseudomonas palustris (strain BisB5).